The chain runs to 343 residues: Trace amine-associated receptor 3 (343 aa).

Residues 1–35 (MDLIYIPEDLSSCPKFGNKSCPPTNRSFRVRMIMY) lie on the Extracellular side of the membrane. Residues asparagine 18 and asparagine 25 are each glycosylated (N-linked (GlcNAc...) asparagine). 2 cysteine pairs are disulfide-bonded: cysteine 21-cysteine 185 and cysteine 104-cysteine 189. Residues 36-56 (LFMTGAMVITIFGNLVIIISI) form a helical membrane-spanning segment. Residues 57–68 (SHFKQLHSPTNF) are Cytoplasmic-facing. Residues 69-89 (LILSMATTDFLLGFVIMPYSM) form a helical membrane-spanning segment. Topologically, residues 90-150 (VRSVESCWYF…TTMTVSMIKR (61 aa)) are extracellular. A helical membrane pass occupies residues 151–168 (LLAFCWAAPALFSFGLVL). Topologically, residues 169–172 (SEAN) are cytoplasmic. The extracellular Loop 2 (ECL2) stretch occupies residues 173–186 (VSGMQSYEILVACF). The chain crosses the membrane as a helical span at residues 173–193 (VSGMQSYEILVACFNFCALTF). Residues 194–198 (NKFWG) lie on the Extracellular side of the membrane. Residues 199–223 (TILFTTCFFTPGSIMVGIYGKIFIV) traverse the membrane as a helical segment. Residues 224 to 257 (SRRHARALSDMPANTKGAVGKNLSKKKDRKAAKT) lie on the Cytoplasmic side of the membrane. Residues 258–278 (LGIVMGVFLACWLPCFLAVLI) traverse the membrane as a helical segment. The Extracellular portion of the chain corresponds to 279 to 287 (DPYLDYSTP). The helical transmembrane segment at 288–308 (IIVLDLLVWLGYFNSTCNPLI) threads the bilayer. Over 309–343 (HGFFYPWFRKALQFIVSGKIFRSNSDTANLFPEAH) the chain is Cytoplasmic.

The protein belongs to the G-protein coupled receptor 1 family. As to expression, specifically expressed in neurons of the olfactory epithelium.

It localises to the cell membrane. In terms of biological role, olfactory receptor activated by several primary trace amines, including isoamylamine. Activated by isoamylamine and cyclohexylamine, but not to the corresponding alcohols, isoamylalcohol and cyclohexanol. This receptor is probably mediated by the G(s)-class of G-proteins which activate adenylate cyclase. This chain is Trace amine-associated receptor 3, found in Mus musculus (Mouse).